We begin with the raw amino-acid sequence, 208 residues long: Uracil phosphoribosyltransferase (208 aa).

Residues Arg-78, Arg-103, and 130-138 (DPMLATGGS) each bind 5-phospho-alpha-D-ribose 1-diphosphate. Residues Ile-193 and 198-200 (GDA) each bind uracil. Asp-199 provides a ligand contact to 5-phospho-alpha-D-ribose 1-diphosphate.

This sequence belongs to the UPRTase family. The cofactor is Mg(2+).

It catalyses the reaction UMP + diphosphate = 5-phospho-alpha-D-ribose 1-diphosphate + uracil. It participates in pyrimidine metabolism; UMP biosynthesis via salvage pathway; UMP from uracil: step 1/1. With respect to regulation, allosterically activated by GTP. Functionally, catalyzes the conversion of uracil and 5-phospho-alpha-D-ribose 1-diphosphate (PRPP) to UMP and diphosphate. This is Uracil phosphoribosyltransferase from Neisseria gonorrhoeae (strain ATCC 700825 / FA 1090).